Reading from the N-terminus, the 833-residue chain is Leucine--tRNA ligase (833 aa).

The 'HIGH' region signature appears at 41–52 (PYPSGAGLHVGH). The 'KMSKS' region motif lies at 610-614 (KMSKS). An ATP-binding site is contributed by Lys-613.

This sequence belongs to the class-I aminoacyl-tRNA synthetase family.

The protein localises to the cytoplasm. It catalyses the reaction tRNA(Leu) + L-leucine + ATP = L-leucyl-tRNA(Leu) + AMP + diphosphate. In Streptococcus pyogenes serotype M5 (strain Manfredo), this protein is Leucine--tRNA ligase.